We begin with the raw amino-acid sequence, 446 residues long: Glutamate--tRNA ligase (446 aa).

A 'HIGH' region motif is present at residues Pro-9–Asn-19. Residues Gly-240–Arg-244 carry the 'KMSKS' region motif. Lys-243 lines the ATP pocket.

This sequence belongs to the class-I aminoacyl-tRNA synthetase family. Glutamate--tRNA ligase type 1 subfamily. Monomer.

Its subcellular location is the cytoplasm. The enzyme catalyses tRNA(Glu) + L-glutamate + ATP = L-glutamyl-tRNA(Glu) + AMP + diphosphate. In terms of biological role, catalyzes the attachment of glutamate to tRNA(Glu) in a two-step reaction: glutamate is first activated by ATP to form Glu-AMP and then transferred to the acceptor end of tRNA(Glu). This chain is Glutamate--tRNA ligase, found in Azospirillum brasilense.